The primary structure comprises 156 residues: ATP synthase subunit b (156 aa).

Residues 7 to 29 (LFAQMVVFLVLAWFTMKFVWPPL) traverse the membrane as a helical segment.

The protein belongs to the ATPase B chain family. F-type ATPases have 2 components, F(1) - the catalytic core - and F(0) - the membrane proton channel. F(1) has five subunits: alpha(3), beta(3), gamma(1), delta(1), epsilon(1). F(0) has three main subunits: a(1), b(2) and c(10-14). The alpha and beta chains form an alternating ring which encloses part of the gamma chain. F(1) is attached to F(0) by a central stalk formed by the gamma and epsilon chains, while a peripheral stalk is formed by the delta and b chains.

Its subcellular location is the cell inner membrane. Functionally, f(1)F(0) ATP synthase produces ATP from ADP in the presence of a proton or sodium gradient. F-type ATPases consist of two structural domains, F(1) containing the extramembraneous catalytic core and F(0) containing the membrane proton channel, linked together by a central stalk and a peripheral stalk. During catalysis, ATP synthesis in the catalytic domain of F(1) is coupled via a rotary mechanism of the central stalk subunits to proton translocation. Component of the F(0) channel, it forms part of the peripheral stalk, linking F(1) to F(0). This chain is ATP synthase subunit b, found in Burkholderia multivorans (strain ATCC 17616 / 249).